A 74-amino-acid polypeptide reads, in one-letter code: Probable molt-inhibiting hormone (74 aa).

Disulfide bonds link cysteine 6/cysteine 43, cysteine 23/cysteine 39, and cysteine 26/cysteine 52. At alanine 74 the chain carries Alanine amide.

It localises to the secreted. Its function is as follows. Inhibits Y-organs where molting hormone (ecdysteroid) is secreted. A molting cycle is initiated when MIH secretion diminishes or stops. Has little or no hyperglycemic activity. The chain is Probable molt-inhibiting hormone from Jasus lalandii (Cape rock lobster).